The following is a 213-amino-acid chain: Ribonuclease HII (213 aa).

Residues 2–213 enclose the RNase H type-2 domain; sequence GRVAGIDEAG…KEWATWKRLR (212 aa). A divalent metal cation contacts are provided by Asp-8, Glu-9, and Asp-113.

It belongs to the RNase HII family. The cofactor is Mn(2+). Requires Mg(2+) as cofactor.

It localises to the cytoplasm. It carries out the reaction Endonucleolytic cleavage to 5'-phosphomonoester.. Endonuclease that specifically degrades the RNA of RNA-DNA hybrids. This chain is Ribonuclease HII, found in Thermofilum pendens (strain DSM 2475 / Hrk 5).